The following is a 469-amino-acid chain: MTTKTRFAPSPTGFLHVGGARTALYSWLYARANQGEFVLRVEDTDIERSTPEACEAILEGMQWLGLNWDEGPYYQTKRFDRYNEIIAQMLEQGTAYKCYCSRERIETMRDEQAAKGEQQKYDGCCRDKAPRDTDEPFVIRFKNPTEGSVVFDDHVRGRIEISNDLLDDLIIARTEGTPTYNFCVVVDDWDMGITCVVRGEDHINNTPRQINILKALGAPIPEYAHVAMILGDDGAKLSKRHGAVGVMQYRDDGYLPEALLNYLVRLGWSHGDQEVFSIDEMKQLFKLDDINKAASAFNTEKLNWLNQHYIKELDPEYVAKHLEWHMADQKIDTSNGPALSAVVTALSERAKTLKELAASSRYFYEDFAEFDATAAKKHLRGVAMEPLELVQKKLAELSEWTLEGIHQAIEDTATELEVGMGKVGMPLRVAVTGAGMSPAVDLTLFLVGKARCEQRISKAIEFVANRINS.

A 'HIGH' region motif is present at residues 9–19 (PSPTGFLHVGG). Positions 98, 100, 125, and 127 each coordinate Zn(2+). The 'KMSKS' region signature appears at 236–240 (KLSKR). Lys239 is a binding site for ATP.

This sequence belongs to the class-I aminoacyl-tRNA synthetase family. Glutamate--tRNA ligase type 1 subfamily. Monomer. The cofactor is Zn(2+).

It localises to the cytoplasm. The enzyme catalyses tRNA(Glu) + L-glutamate + ATP = L-glutamyl-tRNA(Glu) + AMP + diphosphate. In terms of biological role, catalyzes the attachment of glutamate to tRNA(Glu) in a two-step reaction: glutamate is first activated by ATP to form Glu-AMP and then transferred to the acceptor end of tRNA(Glu). This Shewanella sediminis (strain HAW-EB3) protein is Glutamate--tRNA ligase.